We begin with the raw amino-acid sequence, 183 residues long: Threonylcarbamoyl-AMP synthase (183 aa).

One can recognise a YrdC-like domain in the interval 1–183 (MELAQIVERL…IFSRQIFRRG (183 aa)).

This sequence belongs to the SUA5 family. TsaC subfamily.

It localises to the cytoplasm. It carries out the reaction L-threonine + hydrogencarbonate + ATP = L-threonylcarbamoyladenylate + diphosphate + H2O. Required for the formation of a threonylcarbamoyl group on adenosine at position 37 (t(6)A37) in tRNAs that read codons beginning with adenine. Catalyzes the conversion of L-threonine, HCO(3)(-)/CO(2) and ATP to give threonylcarbamoyl-AMP (TC-AMP) as the acyladenylate intermediate, with the release of diphosphate. The polypeptide is Threonylcarbamoyl-AMP synthase (Mannheimia succiniciproducens (strain KCTC 0769BP / MBEL55E)).